The chain runs to 41 residues: U-megalopygitoxin(11)-Mo28 (41 aa).

The first 29 residues, 1 to 29 (MRTTLLLLIIAITVMVFVSEAYAAPAPEP), serve as a signal peptide directing secretion.

This sequence belongs to the caterpillar 11 family. In terms of tissue distribution, expressed by the venom apparatus.

The protein resides in the secreted. Its function is as follows. Probable toxin. The chain is U-megalopygitoxin(11)-Mo28 from Megalopyge opercularis (Southern flannel moth).